We begin with the raw amino-acid sequence, 1271 residues long: Breakpoint cluster region protein (1271 aa).

N-acetylmethionine is present on M1. The segment at 1–426 is kinase; the sequence is MVDPVGFAEA…DGEGAFHGDA (426 aa). A coiled-coil region spans residues 28 to 55; sequence VGDIEQELERCKASIRRLEQEVNQERFR. The disordered stretch occupies residues 67 to 173; the sequence is KKSYDRQRWG…GHGQPGADAE (107 aa). Positions 87–105 are enriched in low complexity; it reads ASEPRASASRPQPAPADGA. Position 122 is a phosphoserine (S122). Low complexity predominate over residues 123 to 138; it reads PGKARPGTARRPGAAA. S139 bears the Phosphoserine mark. Y177 bears the Phosphotyrosine; by HCK mark. Over residues 185 to 198 the composition is skewed to basic and acidic residues; the sequence is ERGLVKVNDKEVSD. Disordered regions lie at residues 185–247, 286–392, and 416–476; these read ERGL…GDYE, GMME…HKRH, and NDGE…SRDA. Residues 197 to 385 are binding to ABL SH2-domain; sequence SDRISSLGSQ…QSFDSSSPPT (189 aa). Residues 199–208 show a composition bias toward polar residues; it reads RISSLGSQAM. 4 positions are modified to phosphoserine: S202, S215, S222, and S236. Phosphotyrosine; by FES is present on Y246. 2 stretches are compositionally biased toward low complexity: residues 346–356 and 369–382; these read SSGQSSRVSPS and SPSQNSQQSFDSSS. Phosphoserine is present on residues S356, S377, and S382. T385 bears the Phosphothreonine mark. The span at 441 to 451 shows a compositional bias: basic and acidic residues; that stretch reads DRAEEQRRHQD. Phosphoserine occurs at positions 459 and 463. Omega-N-methylarginine is present on R471. S473 and S488 each carry phosphoserine. Residues 498–691 enclose the DH domain; sequence MRKWVLSGIL…QNFLSSINEE (194 aa). At Y554 the chain carries Phosphotyrosine. A Phosphothreonine modification is found at T641. Y644 carries the phosphotyrosine modification. A Phosphothreonine modification is found at T693. Positions 708-866 constitute a PH domain; that stretch reads QLLKDSFMVE…WRENIREQQK (159 aa). Residues 893 to 1020 enclose the C2 domain; it reads HSIPLTINKE…QDRDWQRTVI (128 aa). Position 894 is a phosphoserine (S894). The Rho-GAP domain occupies 1054–1248; the sequence is VKIAVVTKRE…VMSQVQVLLY (195 aa). S1264 is subject to Phosphoserine.

Homotetramer. Interacts with PDZK1. May interact with CCPG1. Interacts with FES/FPS, ABL1, PIK3R1 and GRB2. Interacts with HCK. Interacts with SH2D5. Interacts with DLG4. In terms of processing, autophosphorylated. Phosphorylated by FES/FPS on tyrosine residues, leading to down-regulation of the BCR kinase activity. Phosphorylation at Tyr-177 by HCK is important for interaction with GRB2.

The protein localises to the postsynaptic density. It is found in the cell projection. Its subcellular location is the dendritic spine. It localises to the axon. The protein resides in the synapse. It carries out the reaction L-seryl-[protein] + ATP = O-phospho-L-seryl-[protein] + ADP + H(+). It catalyses the reaction L-threonyl-[protein] + ATP = O-phospho-L-threonyl-[protein] + ADP + H(+). Protein with a unique structure having two opposing regulatory activities toward small GTP-binding proteins. The C-terminus is a GTPase-activating protein (GAP) domain which stimulates GTP hydrolysis by RAC1, RAC2 and CDC42. Accelerates the intrinsic rate of GTP hydrolysis of RAC1 or CDC42, leading to down-regulation of the active GTP-bound form. The central Dbl homology (DH) domain functions as guanine nucleotide exchange factor (GEF) that modulates the GTPases CDC42, RHOA and RAC1. Promotes the conversion of CDC42, RHOA and RAC1 from the GDP-bound to the GTP-bound form. The amino terminus contains an intrinsic kinase activity. Functions as an important negative regulator of neuronal RAC1 activity. Regulates macrophage functions such as CSF1-directed motility and phagocytosis through the modulation of RAC1 activity. Plays a major role as a RHOA GEF in keratinocytes being involved in focal adhesion formation and keratinocyte differentiation. This chain is Breakpoint cluster region protein, found in Homo sapiens (Human).